The chain runs to 500 residues: NAD(P)H-quinone oxidoreductase chain 4, chloroplastic (500 aa).

The next 14 membrane-spanning stretches (helical) occupy residues 4–24 (FPWL…IFFL), 35–55 (YTIC…CYHF), 87–107 (IGPI…AWPI), 113–130 (LFHF…GSFS), 134–154 (LLLF…LLCM), 167–187 (FILY…GVAL), 208–228 (VLEI…SPII), 242–262 (HYST…YGLI), 272–292 (AHSI…IYAA), 305–325 (IAYS…SLTD), 330–350 (GALL…FLAG), 386–406 (LALP…GIIT), 411–431 (LLIP…LTPI), and 462–482 (LFLS…PDFV).

It belongs to the complex I subunit 4 family.

The protein resides in the plastid. Its subcellular location is the chloroplast thylakoid membrane. It carries out the reaction a plastoquinone + NADH + (n+1) H(+)(in) = a plastoquinol + NAD(+) + n H(+)(out). The catalysed reaction is a plastoquinone + NADPH + (n+1) H(+)(in) = a plastoquinol + NADP(+) + n H(+)(out). The chain is NAD(P)H-quinone oxidoreductase chain 4, chloroplastic from Nicotiana tomentosiformis (Tobacco).